We begin with the raw amino-acid sequence, 128 residues long: Transmembrane protein 234 homolog (128 aa).

Helical transmembrane passes span 3-23, 53-73, 80-100, and 104-124; these read TYNI…NPLI, PSYT…FYTL, LVVP…GMLL, and VLHF…TICV.

Belongs to the TMEM234 family.

Its subcellular location is the membrane. The polypeptide is Transmembrane protein 234 homolog (Dictyostelium discoideum (Social amoeba)).